We begin with the raw amino-acid sequence, 455 residues long: Major capsid protein (455 aa).

This sequence belongs to the ascoviridae capsid protein family.

Its subcellular location is the virion. In terms of biological role, major protein of the capsid. This Heliothis virescens ascovirus 3e (HvAV-3e) protein is Major capsid protein (MCP).